Reading from the N-terminus, the 323-residue chain is GDP-L-fucose synthase 1 (323 aa).

Residue A2 is modified to N-acetylalanine. G23 to G29 lines the NADP(+) pocket. The Proton donor/acceptor role is filled by Y149. NADP(+)-binding positions include K153, P176–L179, and H192. Substrate-binding residues include R200, W215, R222, and D282.

This sequence belongs to the NAD(P)-dependent epimerase/dehydratase family. Fucose synthase subfamily. Binds and stabilizes MUR1. Homodimer. As to expression, highly expressed in roots and flowers, less abundant in leaves, stems and siliques.

The enzyme catalyses GDP-beta-L-fucose + NADP(+) = GDP-4-dehydro-alpha-D-rhamnose + NADPH + H(+). It participates in nucleotide-sugar biosynthesis; GDP-L-fucose biosynthesis via de novo pathway; GDP-L-fucose from GDP-alpha-D-mannose: step 2/2. In terms of biological role, catalyzes the two-step NADP-dependent conversion of GDP-4-dehydro-6-deoxy-D-mannose to GDP-fucose, involving an epimerase and a reductase reaction. Not involved in the synthesis of GDP-L-galactose from GDP-D-mannose. The protein is GDP-L-fucose synthase 1 (GER1) of Arabidopsis thaliana (Mouse-ear cress).